The following is a 124-amino-acid chain: Holo-[acyl-carrier-protein] synthase (124 aa).

Mg(2+) contacts are provided by aspartate 7 and glutamate 55.

This sequence belongs to the P-Pant transferase superfamily. AcpS family. The cofactor is Mg(2+).

It localises to the cytoplasm. The enzyme catalyses apo-[ACP] + CoA = holo-[ACP] + adenosine 3',5'-bisphosphate + H(+). In terms of biological role, transfers the 4'-phosphopantetheine moiety from coenzyme A to a Ser of acyl-carrier-protein. The sequence is that of Holo-[acyl-carrier-protein] synthase from Borrelia garinii subsp. bavariensis (strain ATCC BAA-2496 / DSM 23469 / PBi) (Borreliella bavariensis).